Here is a 395-residue protein sequence, read N- to C-terminus: Chaperone protein DnaJ 1 (395 aa).

The J domain occupies 10–75 (DFYQELGVSS…AKRKEYDETR (66 aa)). The CR-type zinc-finger motif lies at 164–242 (GVAMPLRLTS…CKGTGVTTRT (79 aa)). Zn(2+)-binding residues include Cys177, Cys180, Cys194, Cys197, Cys216, Cys219, Cys230, and Cys233. 4 CXXCXGXG motif repeats span residues 177-184 (CTNCHGSG), 194-201 (CPTCNGSG), 216-223 (CTDCRGSG), and 230-237 (CEECKGTG).

This sequence belongs to the DnaJ family. As to quaternary structure, homodimer. The cofactor is Zn(2+).

It localises to the cytoplasm. Its function is as follows. Participates actively in the response to hyperosmotic and heat shock by preventing the aggregation of stress-denatured proteins and by disaggregating proteins, also in an autonomous, DnaK-independent fashion. Unfolded proteins bind initially to DnaJ; upon interaction with the DnaJ-bound protein, DnaK hydrolyzes its bound ATP, resulting in the formation of a stable complex. GrpE releases ADP from DnaK; ATP binding to DnaK triggers the release of the substrate protein, thus completing the reaction cycle. Several rounds of ATP-dependent interactions between DnaJ, DnaK and GrpE are required for fully efficient folding. Also involved, together with DnaK and GrpE, in the DNA replication of plasmids through activation of initiation proteins. This chain is Chaperone protein DnaJ 1, found in Mycobacterium bovis (strain ATCC BAA-935 / AF2122/97).